A 268-amino-acid chain; its full sequence is Tryptophan synthase alpha chain (268 aa).

Residues glutamate 49 and aspartate 60 each act as proton acceptor in the active site.

Belongs to the TrpA family. In terms of assembly, tetramer of two alpha and two beta chains.

It carries out the reaction (1S,2R)-1-C-(indol-3-yl)glycerol 3-phosphate + L-serine = D-glyceraldehyde 3-phosphate + L-tryptophan + H2O. Its pathway is amino-acid biosynthesis; L-tryptophan biosynthesis; L-tryptophan from chorismate: step 5/5. Functionally, the alpha subunit is responsible for the aldol cleavage of indoleglycerol phosphate to indole and glyceraldehyde 3-phosphate. This is Tryptophan synthase alpha chain from Escherichia coli (strain SE11).